A 569-amino-acid polypeptide reads, in one-letter code: Pyruvate decarboxylase (569 aa).

Asp-38 and His-124 together coordinate pyruvate. Residues Thr-398 and Gly-421–Ile-423 contribute to the thiamine diphosphate site. Asp-451 contributes to the Mg(2+) binding site. Residues Gly-452–Ser-453 and Asn-478–Ile-483 each bind thiamine diphosphate. Asn-478 and Gly-480 together coordinate Mg(2+). Glu-484 lines the pyruvate pocket.

Belongs to the TPP enzyme family. As to quaternary structure, homotetramer. Mg(2+) is required as a cofactor. Requires thiamine diphosphate as cofactor.

It catalyses the reaction a 2-oxocarboxylate + H(+) = an aldehyde + CO2. The catalysed reaction is pyruvate + H(+) = acetaldehyde + CO2. The sequence is that of Pyruvate decarboxylase (pdcA) from Aspergillus terreus (strain NIH 2624 / FGSC A1156).